The chain runs to 649 residues: MMGSKREEERNEKIIRGLMKLPPNRRCINCNSLGPQYVCTTFWTFVCMACSGIHREFTHRVKSVSMSKFTSKEVEVLQNGGNQRAREIYLKNWDHQRQRLPENSNAERVREFIKNVYVQKKYAGANDADKPSKDSQDHVSSEDMTRRANSYHSYSQSPPYDYQYEERRYGKIPLGFTGKSASVKGLHAKASSFVYSPGRFSDHMFEDQFSNEDSAPRASDYSVSSAGDPFRSDIQSPNFQQEAEFRSPQFQHSNAPPSENLFPGRQHQRTTSSGSVRSVDSNFMSIKSYTSGGLGEAVSESRQNTGSQQGKTSNHVPLVAESTKAPIDLFQLPGAPVAQSVDTFQPSIAPRSPPVNLQQAPQTYSFTPANSFAGNLGQQPTSRPSELSAPKNEGWASFDNPMPAAKSTNVITSPGDFQLELKIEEILQPSTSMQLPPYPSTVDQHALSIPSPWQEDLSNVLKDVVDNPQPWNAFPDSIEANPLDSSRNIHQQVDGASTSSYNTDHQHLESQVLEELSNDGTQTTRIPAGSSAFGFPGNIGMAPSYSEEAWQHVNEQKSANPFDLPYDSEFDSNDMFLDMSSLQGALPDIQTPQAFLNGVSQPWLAADSVPSYLPAPAVAQGGLAYMAGQASTNSAAQGPVAFTGGNPFA.

The region spanning 12 to 130 (EKIIRGLMKL…KYAGANDADK (119 aa)) is the Arf-GAP domain. A C4-type zinc finger spans residues 27-50 (CINCNSLGPQYVCTTFWTFVCMAC). 4 disordered regions span residues 124–159 (GANDADKPSKDSQDHVSSEDMTRRANSYHSYSQSPP), 209–279 (FSNE…VRSV), 294–316 (LGEAVSESRQNTGSQQGKTSNHV), and 366–391 (FTPANSFAGNLGQQPTSRPSELSAPK). A compositionally biased stretch (basic and acidic residues) spans 127–146 (DADKPSKDSQDHVSSEDMTR). Residues 150–159 (SYHSYSQSPP) show a composition bias toward low complexity. Composition is skewed to polar residues over residues 248–257 (PQFQHSNAPP), 269–279 (RTTSSGSVRSV), 300–315 (ESRQNTGSQQGKTSNH), and 366–385 (FTPANSFAGNLGQQPTSRPS).

Its function is as follows. GTPase-activating protein (GAP) for ADP ribosylation factor (ARF). The protein is Probable ADP-ribosylation factor GTPase-activating protein AGD14 (AGD14) of Arabidopsis thaliana (Mouse-ear cress).